We begin with the raw amino-acid sequence, 146 residues long: Large ribosomal subunit protein uL15x (146 aa).

2 stretches are compositionally biased toward basic residues: residues 1–14 (MTTRFKKNRKKRGH) and 21–30 (RIGKHRKHPG). The disordered stretch occupies residues 1–35 (MTTRFKKNRKKRGHVSAGHGRIGKHRKHPGGRGNA).

This sequence belongs to the universal ribosomal protein uL15 family.

This chain is Large ribosomal subunit protein uL15x (RPL27AC), found in Arabidopsis thaliana (Mouse-ear cress).